Here is a 414-residue protein sequence, read N- to C-terminus: Acetate kinase (414 aa).

Position 7 (Asn-7) interacts with Mg(2+). Lys-14 provides a ligand contact to ATP. Arg-99 contacts substrate. Asp-157 (proton donor/acceptor) is an active-site residue. Residues 217-221 (HLGNG) and 341-345 (GIGEN) each bind ATP. Position 395 (Glu-395) interacts with Mg(2+).

The protein belongs to the acetokinase family. Homodimer. Mg(2+) is required as a cofactor. The cofactor is Mn(2+).

It is found in the cytoplasm. It catalyses the reaction acetate + ATP = acetyl phosphate + ADP. It functions in the pathway metabolic intermediate biosynthesis; acetyl-CoA biosynthesis; acetyl-CoA from acetate: step 1/2. Functionally, catalyzes the formation of acetyl phosphate from acetate and ATP. Can also catalyze the reverse reaction. In Solibacter usitatus (strain Ellin6076), this protein is Acetate kinase.